A 336-amino-acid chain; its full sequence is Phosphate acyltransferase (336 aa).

Belongs to the PlsX family. As to quaternary structure, homodimer. Probably interacts with PlsY.

It localises to the cytoplasm. It catalyses the reaction a fatty acyl-[ACP] + phosphate = an acyl phosphate + holo-[ACP]. The protein operates within lipid metabolism; phospholipid metabolism. In terms of biological role, catalyzes the reversible formation of acyl-phosphate (acyl-PO(4)) from acyl-[acyl-carrier-protein] (acyl-ACP). This enzyme utilizes acyl-ACP as fatty acyl donor, but not acyl-CoA. This Pseudomonas aeruginosa (strain UCBPP-PA14) protein is Phosphate acyltransferase.